The sequence spans 214 residues: Thymidylate kinase (214 aa).

ATP is bound at residue 10–17 (GGEGAGKS).

The protein belongs to the thymidylate kinase family.

It carries out the reaction dTMP + ATP = dTDP + ADP. In terms of biological role, phosphorylation of dTMP to form dTDP in both de novo and salvage pathways of dTTP synthesis. The polypeptide is Thymidylate kinase (Brucella canis (strain ATCC 23365 / NCTC 10854 / RM-666)).